The chain runs to 267 residues: D-aminoacyl-tRNA deacylase (267 aa).

The protein belongs to the DtdA deacylase family. Monomer. Zn(2+) serves as cofactor.

It catalyses the reaction a D-aminoacyl-tRNA + H2O = a tRNA + a D-alpha-amino acid + H(+). It carries out the reaction glycyl-tRNA(Ala) + H2O = tRNA(Ala) + glycine + H(+). Functionally, D-aminoacyl-tRNA deacylase with broad substrate specificity. By recycling D-aminoacyl-tRNA to D-amino acids and free tRNA molecules, this enzyme counteracts the toxicity associated with the formation of D-aminoacyl-tRNA entities in vivo. The chain is D-aminoacyl-tRNA deacylase from Methanothrix thermoacetophila (strain DSM 6194 / JCM 14653 / NBRC 101360 / PT) (Methanosaeta thermophila).